The primary structure comprises 122 residues: Flagellar protein FliT (122 aa).

Residues 1-50 form a required for homodimerization region; the sequence is MTSTVEFINRWQRIALLSQSLLELAQRGEWDLLLQQEVSYLQRIETVMEK. Positions 60–98 are fliD binding; it reads IQDMVAGYIKQTLDNEQLLKGLLQQRLDELSSLIGQSTR.

It belongs to the FliT family. As to quaternary structure, homodimer. Interacts with FliD and FlhC.

The protein localises to the cytoplasm. It localises to the cytosol. Functionally, dual-function protein that regulates the transcription of class 2 flagellar operons and that also acts as an export chaperone for the filament-capping protein FliD. As a transcriptional regulator, acts as an anti-FlhDC factor; it directly binds FlhC, thus inhibiting the binding of the FlhC/FlhD complex to class 2 promoters, resulting in decreased expression of class 2 flagellar operons. As a chaperone, effects FliD transition to the membrane by preventing its premature polymerization, and by directing it to the export apparatus. The chain is Flagellar protein FliT from Salmonella paratyphi A (strain AKU_12601).